A 216-amino-acid chain; its full sequence is Large ribosomal subunit protein uL3 (216 aa).

Disordered regions lie at residues 89-108 (QRAS…VGGF) and 139-158 (NTHG…QCQS). Position 157 is an N5-methylglutamine (Gln157).

The protein belongs to the universal ribosomal protein uL3 family. In terms of assembly, part of the 50S ribosomal subunit. Forms a cluster with proteins L14 and L19. Methylated by PrmB.

In terms of biological role, one of the primary rRNA binding proteins, it binds directly near the 3'-end of the 23S rRNA, where it nucleates assembly of the 50S subunit. The sequence is that of Large ribosomal subunit protein uL3 from Halorhodospira halophila (strain DSM 244 / SL1) (Ectothiorhodospira halophila (strain DSM 244 / SL1)).